Consider the following 22-residue polypeptide: Sex pheromone inhibitor determinant (22 aa).

Residues 1 to 14 constitute a propeptide that is removed on maturation; sequence MSKRAMKKIIPLIT.

The protein localises to the secreted. Functionally, acts as a competitive inhibitor of the CAD1 pheromone. The polypeptide is Sex pheromone inhibitor determinant (iad) (Enterococcus faecalis (strain ATCC 700802 / V583)).